We begin with the raw amino-acid sequence, 439 residues long: MESRGKILMERYELGRLLGKGTFGKVHYARNLESNQSVAIKMMDKQQVLKVGLSEQIRREITTMRLVAHKNIVQLHEVMATRNKIYFVMEYVKGGELFEKVAKRGKLTEVVAHKYFQQLISAVDYCHSRGVYHRDLKPENLLLDENENLKVSDFGLSALSESKRQDGLLHTTCGTPAYVAPEVISKIGYDGAKSDIWSCGVILFVLVAGYLPFQGPNLMEMYRKIQHGEFRCPGWFSRKLQKLLYKIMDPNPSTRISIQKIKESTWFRKGPEENRILKERTLNENTTKNVALVLGVRRKKNAHEDVKPMSVTNLNAFEIISFSKGFDLSGMFIVKEWRNEARFTSDKSASTIISKLEDVAKALNLRVRKKDNGVVKMQGRKEGRNGVLQFDIEIFEVTTSYHIIEMKQTSGDSLEYRQLLEEGIRPALKDIVLAWHGDE.

The 256-residue stretch at 12–267 (YELGRLLGKG…IQKIKESTWF (256 aa)) folds into the Protein kinase domain. ATP contacts are provided by residues 18–26 (LGKGTFGKV) and Lys-41. Asp-135 acts as the Proton acceptor in catalysis. Residues 153–182 (DFGLSALSESKRQDGLLHTTCGTPAYVAPE) form an activation loop region. Residues 298–333 (RKKNAHEDVKPMSVTNLNAFEIISFSKGFDLSGMFI) form the NAF domain. Positions 338–367 (RNEARFTSDKSASTIISKLEDVAKALNLRV) are PPI.

Belongs to the protein kinase superfamily. CAMK Ser/Thr protein kinase family. SNF1 subfamily. The cofactor is Mn(2+).

The enzyme catalyses L-seryl-[protein] + ATP = O-phospho-L-seryl-[protein] + ADP + H(+). It catalyses the reaction L-threonyl-[protein] + ATP = O-phospho-L-threonyl-[protein] + ADP + H(+). Functionally, CIPK serine-threonine protein kinases interact with CBL proteins. Binding of a CBL protein to the regulatory NAF domain of CIPK protein lead to the activation of the kinase in a calcium-dependent manner. This is CBL-interacting protein kinase 14 (CIPK14) from Oryza sativa subsp. japonica (Rice).